Here is a 418-residue protein sequence, read N- to C-terminus: Glutamyl-tRNA reductase (418 aa).

Residues 49–52, Ser109, 114–116, and Gln120 contribute to the substrate site; these read TCNR and EPQ. Cys50 acts as the Nucleophile in catalysis. Residue 189–194 participates in NADP(+) binding; the sequence is GAGETI.

This sequence belongs to the glutamyl-tRNA reductase family. In terms of assembly, homodimer.

The catalysed reaction is (S)-4-amino-5-oxopentanoate + tRNA(Glu) + NADP(+) = L-glutamyl-tRNA(Glu) + NADPH + H(+). It participates in porphyrin-containing compound metabolism; protoporphyrin-IX biosynthesis; 5-aminolevulinate from L-glutamyl-tRNA(Glu): step 1/2. Catalyzes the NADPH-dependent reduction of glutamyl-tRNA(Glu) to glutamate 1-semialdehyde (GSA). This is Glutamyl-tRNA reductase from Shigella dysenteriae serotype 1 (strain Sd197).